A 558-amino-acid chain; its full sequence is 2-isopropylmalate synthase (558 aa).

One can recognise a Pyruvate carboxyltransferase domain in the interval 28–304 (PIWCSVDLRD…DPELEFSNLN (277 aa)). Positions 37, 243, 245, and 279 each coordinate Mg(2+). A regulatory domain region spans residues 438–558 (NRSPYYLKNY…VSALNRSKLK (121 aa)).

Belongs to the alpha-IPM synthase/homocitrate synthase family. LeuA type 2 subfamily. In terms of assembly, homodimer. It depends on Mg(2+) as a cofactor.

It is found in the cytoplasm. The enzyme catalyses 3-methyl-2-oxobutanoate + acetyl-CoA + H2O = (2S)-2-isopropylmalate + CoA + H(+). It participates in amino-acid biosynthesis; L-leucine biosynthesis; L-leucine from 3-methyl-2-oxobutanoate: step 1/4. Functionally, catalyzes the condensation of the acetyl group of acetyl-CoA with 3-methyl-2-oxobutanoate (2-ketoisovalerate) to form 3-carboxy-3-hydroxy-4-methylpentanoate (2-isopropylmalate). The sequence is that of 2-isopropylmalate synthase from Clostridium acetobutylicum (strain ATCC 824 / DSM 792 / JCM 1419 / IAM 19013 / LMG 5710 / NBRC 13948 / NRRL B-527 / VKM B-1787 / 2291 / W).